The sequence spans 768 residues: UPF0313 protein VV1_2212 (768 aa).

A Radical SAM core domain is found at 363–640; the sequence is AYDMIKTSVN…LHKALLRYHD (278 aa). [4Fe-4S] cluster contacts are provided by cysteine 377, cysteine 381, and cysteine 384. Residues 674–768 are disordered; that stretch reads DARTPAQRRK…GGRNQPSRAR (95 aa). Positions 679 to 689 are enriched in basic residues; that stretch reads AQRRKSGRHGA. Over residues 719-731 the composition is skewed to polar residues; that stretch reads GGQSNSAPSRSGS.

Belongs to the UPF0313 family. It depends on [4Fe-4S] cluster as a cofactor.

In Vibrio vulnificus (strain CMCP6), this protein is UPF0313 protein VV1_2212.